The sequence spans 211 residues: Imidazole glycerol phosphate synthase subunit HisH (211 aa).

Residues 4–211 (RVVILDYGSG…QLLANWVATL (208 aa)) form the Glutamine amidotransferase type-1 domain. The Nucleophile role is filled by Cys82. Catalysis depends on residues His192 and Glu194.

As to quaternary structure, heterodimer of HisH and HisF.

The protein localises to the cytoplasm. The enzyme catalyses 5-[(5-phospho-1-deoxy-D-ribulos-1-ylimino)methylamino]-1-(5-phospho-beta-D-ribosyl)imidazole-4-carboxamide + L-glutamine = D-erythro-1-(imidazol-4-yl)glycerol 3-phosphate + 5-amino-1-(5-phospho-beta-D-ribosyl)imidazole-4-carboxamide + L-glutamate + H(+). The catalysed reaction is L-glutamine + H2O = L-glutamate + NH4(+). Its pathway is amino-acid biosynthesis; L-histidine biosynthesis; L-histidine from 5-phospho-alpha-D-ribose 1-diphosphate: step 5/9. Functionally, IGPS catalyzes the conversion of PRFAR and glutamine to IGP, AICAR and glutamate. The HisH subunit catalyzes the hydrolysis of glutamine to glutamate and ammonia as part of the synthesis of IGP and AICAR. The resulting ammonia molecule is channeled to the active site of HisF. The sequence is that of Imidazole glycerol phosphate synthase subunit HisH from Thermobifida fusca (strain YX).